The sequence spans 460 residues: Phosphoglucomutase (460 aa).

The Phosphoserine intermediate role is filled by S103. Residue S103 coordinates Mg(2+). Residues 103–104 (SH) and K113 contribute to the substrate site. 3 residues coordinate Mg(2+): D239, D241, and D243. Substrate is bound by residues 243 to 244 (DR), T303, and 322 to 324 (EMS).

This sequence belongs to the phosphohexose mutase family. Requires Mg(2+) as cofactor.

The protein localises to the cytoplasm. The enzyme catalyses alpha-D-glucose 1-phosphate = alpha-D-glucose 6-phosphate. In terms of biological role, this enzyme participates in both the breakdown and synthesis of glucose. The sequence is that of Phosphoglucomutase (pgm) from Neisseria meningitidis serogroup B (strain ATCC BAA-335 / MC58).